A 220-amino-acid chain; its full sequence is Methylamine utilization ferredoxin-type protein MauM (220 aa).

4Fe-4S ferredoxin-type domains are found at residues 50 to 80 (ALPEDDFLAACVRCGLCVRACPYDTLRLAEM) and 88 to 120 (TPFFVARETPCFMCTDVPCAKACPTGALDRDIP). Residues Cys60, Cys63, Cys66, Cys70, Cys98, Cys101, Cys106, Cys110, Cys138, Cys146, Cys149, Cys153, Cys182, Cys185, Cys188, and Cys192 each contribute to the [4Fe-4S] cluster site. Residues 173 to 204 (VIPTVHSDKCTGCGTCEKHCVLGQAAIRVLPR) enclose the 4Fe-4S ferredoxin-type 3 domain.

The protein operates within one-carbon metabolism; methylamine degradation. In terms of biological role, involved in electron transfer. The chain is Methylamine utilization ferredoxin-type protein MauM (mauM) from Methylorubrum extorquens (strain ATCC 14718 / DSM 1338 / JCM 2805 / NCIMB 9133 / AM1) (Methylobacterium extorquens).